We begin with the raw amino-acid sequence, 307 residues long: Methionyl-tRNA formyltransferase (307 aa).

108 to 111 (SLLP) lines the (6S)-5,6,7,8-tetrahydrofolate pocket.

Belongs to the Fmt family.

The enzyme catalyses L-methionyl-tRNA(fMet) + (6R)-10-formyltetrahydrofolate = N-formyl-L-methionyl-tRNA(fMet) + (6S)-5,6,7,8-tetrahydrofolate + H(+). In terms of biological role, attaches a formyl group to the free amino group of methionyl-tRNA(fMet). The formyl group appears to play a dual role in the initiator identity of N-formylmethionyl-tRNA by promoting its recognition by IF2 and preventing the misappropriation of this tRNA by the elongation apparatus. The polypeptide is Methionyl-tRNA formyltransferase (Xanthomonas oryzae pv. oryzae (strain MAFF 311018)).